Consider the following 143-residue polypeptide: Small ribosomal subunit protein uS9 (143 aa).

The tract at residues 124–143 (PEPKKFGGKGARARFQKSYR) is disordered. The segment covering 134–143 (ARARFQKSYR) has biased composition (basic residues).

This sequence belongs to the universal ribosomal protein uS9 family.

This is Small ribosomal subunit protein uS9 (RPS16) from Candida glabrata (strain ATCC 2001 / BCRC 20586 / JCM 3761 / NBRC 0622 / NRRL Y-65 / CBS 138) (Yeast).